Consider the following 351-residue polypeptide: Protein-glutamate methylesterase/protein-glutamine glutaminase (351 aa).

The Response regulatory domain occupies Lys-3 to Val-120. The residue at position 54 (Asp-54) is a 4-aspartylphosphate. Positions Ile-160–Lys-347 constitute a CheB-type methylesterase domain. Residues Ser-165, His-192, and Asp-289 contribute to the active site.

Belongs to the CheB family. Phosphorylated by CheA. Phosphorylation of the N-terminal regulatory domain activates the methylesterase activity.

It localises to the cytoplasm. The catalysed reaction is [protein]-L-glutamate 5-O-methyl ester + H2O = L-glutamyl-[protein] + methanol + H(+). It carries out the reaction L-glutaminyl-[protein] + H2O = L-glutamyl-[protein] + NH4(+). Functionally, involved in chemotaxis. Part of a chemotaxis signal transduction system that modulates chemotaxis in response to various stimuli. Catalyzes the demethylation of specific methylglutamate residues introduced into the chemoreceptors (methyl-accepting chemotaxis proteins or MCP) by CheR. Also mediates the irreversible deamidation of specific glutamine residues to glutamic acid. This Methanococcoides burtonii (strain DSM 6242 / NBRC 107633 / OCM 468 / ACE-M) protein is Protein-glutamate methylesterase/protein-glutamine glutaminase.